The primary structure comprises 115 residues: MNLMLALTVNTLLTALLTIIMFWLPQLNSYAEKANPYECGFDPLNPARIPFSMKFFLVAITFLLFDLEIALLLSLPWALQTANLPTMIKTSIMFITILALSLAYEWTQKGLDWTE.

3 helical membrane passes run leucine 3–tryptophan 23, phenylalanine 55–leucine 75, and leucine 84–tyrosine 104.

It belongs to the complex I subunit 3 family. Core subunit of respiratory chain NADH dehydrogenase (Complex I) which is composed of 45 different subunits. Interacts with TMEM186. Interacts with TMEM242.

Its subcellular location is the mitochondrion inner membrane. The enzyme catalyses a ubiquinone + NADH + 5 H(+)(in) = a ubiquinol + NAD(+) + 4 H(+)(out). In terms of biological role, core subunit of the mitochondrial membrane respiratory chain NADH dehydrogenase (Complex I) which catalyzes electron transfer from NADH through the respiratory chain, using ubiquinone as an electron acceptor. Essential for the catalytic activity of complex I. This is NADH-ubiquinone oxidoreductase chain 3 from Papio hamadryas (Hamadryas baboon).